The following is a 408-amino-acid chain: Photox toxin (408 aa).

Residues 168–196 (NNQQHIKDSDGRKPVNNMPPPPPPPMADK) are disordered. Residues 184–193 (NMPPPPPPPM) show a composition bias toward pro residues. Residues 190 to 393 (PPPMADKTQK…LRLTDDASAD (204 aa)) form the TR mART core domain. Active-site residues include arginine 288, serine 318, and glutamate 355.

It in the C-terminal section; belongs to the SpvB family.

The enzyme catalyses L-arginyl-[protein] + NAD(+) = N(omega)-(ADP-D-ribosyl)-L-arginyl-[protein] + nicotinamide + H(+). Its function is as follows. Mono-ADP-ribosylates chicken skeletal alpha-actin and human non-skeletal beta- and gamma-actin. Mono-ADP-ribosylates 'Arg-177' of yeast actin, blocking its ability to polymerize. Does not possess NAD(+)-glycohydrolase activity, unlike most mART enzymes. Upon expression in S.cerevisiae almost completely inhibits growth. This is Photox toxin (phxA) from Photorhabdus laumondii subsp. laumondii (strain DSM 15139 / CIP 105565 / TT01) (Photorhabdus luminescens subsp. laumondii).